Here is a 210-residue protein sequence, read N- to C-terminus: Kinetochore protein Spc25 (210 aa).

A coiled-coil region spans residues 42–106 (TMENIKRQQH…KKKQERDKLI (65 aa)).

It belongs to the SPC25 family. Component of the Ndc80 complex, which is composed of Ndc80, Nuf2 and Spc25.

Its subcellular location is the nucleus. It localises to the chromosome. The protein localises to the centromere. It is found in the kinetochore. Acts as a component of the essential kinetochore-associated Ndc80 complex, which is required for chromosome segregation and spindle checkpoint activity during meiosis and mitosis. Required for kinetochore integrity and the organization of stable microtubule binding sites in the outer plate of the kinetochore. Participates in SAC signaling that responds specifically to disruptions in spindle microtubule dynamics. The NDC80 complex synergistically enhances the affinity of the SKA1 complex for microtubules and may allow the NDC80 complex to track depolymerizing microtubules. This is Kinetochore protein Spc25 from Drosophila virilis (Fruit fly).